An 81-amino-acid polypeptide reads, in one-letter code: Sulfur carrier protein TusA (81 aa).

Catalysis depends on Cys-19, which acts as the Cysteine persulfide intermediate.

Belongs to the sulfur carrier protein TusA family.

The protein resides in the cytoplasm. Functionally, sulfur carrier protein which probably makes part of a sulfur-relay system. In Shewanella oneidensis (strain ATCC 700550 / JCM 31522 / CIP 106686 / LMG 19005 / NCIMB 14063 / MR-1), this protein is Sulfur carrier protein TusA.